Consider the following 635-residue polypeptide: PTS system fructose-specific EIIABC component (635 aa).

The 145-residue stretch at 5–149 folds into the PTS EIIA type-2 domain; sequence ELLTKHTIKL…DAIIDIINQH (145 aa). Histidine 67 functions as the Tele-phosphohistidine intermediate; for EIIA activity in the catalytic mechanism. Position 67 is a phosphohistidine; by HPr (histidine 67). The segment at 149–168 is disordered; that stretch reads HDKDDDEEEEEEEAAPAPAG. Residues 152 to 162 show a composition bias toward acidic residues; the sequence is DDDEEEEEEEA. A PTS EIIB type-2 domain is found at 172–267; sequence ILAVTACPTG…PQELIEKAMN (96 aa). Residue cysteine 178 is the Phosphocysteine intermediate; for EIIB activity of the active site. A Phosphocysteine; by EIIA modification is found at cysteine 178. The disordered stretch occupies residues 273–293; that stretch reads YQGSGGGSAASNDDEEAKGKS. The 335-residue stretch at 301-635 folds into the PTS EIIC type-2 domain; that stretch reads FYKHLMSGVS…GIVKKPVTEK (335 aa). A run of 9 helical transmembrane segments spans residues 312 to 332, 350 to 370, 392 to 412, 428 to 448, 470 to 490, 511 to 531, 544 to 564, 569 to 589, and 608 to 628; these read MLPF…WGIH, FIGG…FIAM, NAGF…VILL, PVLI…QFVV, NLVL…GGPL, AAIM…TTIF, ITCY…FAAA, VIPA…FFRV, and MLYL…LGIV.

The protein localises to the cell membrane. It catalyses the reaction D-fructose(out) + N(pros)-phospho-L-histidyl-[protein] = D-fructose 1-phosphate(in) + L-histidyl-[protein]. Its function is as follows. The phosphoenolpyruvate-dependent sugar phosphotransferase system (sugar PTS), a major carbohydrate active transport system, catalyzes the phosphorylation of incoming sugar substrates concomitantly with their translocation across the cell membrane. This system is involved in fructose transport. In Bacillus subtilis (strain 168), this protein is PTS system fructose-specific EIIABC component (fruA).